The chain runs to 282 residues: MSVRLSLPAPAKLNLFLHILGRRDDGYHELQTLFQFLDHGDELHFEARQDGQVRLHTEIAGVPHDSNLIVRAARGLQEASGSLQGVDIWLDKRLPMGGGIGGGSSDAATTLLALNHLWQLGWDEDRIAALGLRLGADVPVFTRGRAAFAEGVGEKLTPVDIPELWYLVLVPQVLVSTAEIFSDPLLTRDSPAIKVRTVLEGDSRNDCQPVVERRYPEVRNALILLNKFVSARLTGTGGCVFGSFPNKAEADKVSALLPDHLQRFVAKGSNVSMLHRKLETLV.

Lys12 is an active-site residue. 95-105 contributes to the ATP binding site; that stretch reads PMGGGIGGGSS. Asp137 is a catalytic residue.

This sequence belongs to the GHMP kinase family. IspE subfamily.

It catalyses the reaction 4-CDP-2-C-methyl-D-erythritol + ATP = 4-CDP-2-C-methyl-D-erythritol 2-phosphate + ADP + H(+). It functions in the pathway isoprenoid biosynthesis; isopentenyl diphosphate biosynthesis via DXP pathway; isopentenyl diphosphate from 1-deoxy-D-xylulose 5-phosphate: step 3/6. In terms of biological role, catalyzes the phosphorylation of the position 2 hydroxy group of 4-diphosphocytidyl-2C-methyl-D-erythritol. This Pseudomonas aeruginosa (strain UCBPP-PA14) protein is 4-diphosphocytidyl-2-C-methyl-D-erythritol kinase.